The primary structure comprises 193 residues: Thioredoxin peroxidase (193 aa).

Residues 3–161 form the Thioredoxin domain; that stretch reads AVVGKLAPSF…ALRLLDAFQF (159 aa). Catalysis depends on Cys48, which acts as the Cysteine sulfenic acid (-SOH) intermediate.

This sequence belongs to the peroxiredoxin family. AhpC/Prx1 subfamily. Homodimer; disulfide-linked, upon oxidation.

It catalyses the reaction a hydroperoxide + [thioredoxin]-dithiol = an alcohol + [thioredoxin]-disulfide + H2O. Its function is as follows. Thiol-specific peroxidase that catalyzes the reduction of hydrogen peroxide and organic hydroperoxides to water and alcohols, respectively. Plays a role in cell protection against oxidative stress by detoxifying peroxides and as sensor of hydrogen peroxide-mediated signaling events. The chain is Thioredoxin peroxidase (TPX) from Echinococcus granulosus (Hydatid tapeworm).